A 179-amino-acid chain; its full sequence is Large ribosomal subunit protein uL5 (179 aa).

Belongs to the universal ribosomal protein uL5 family. In terms of assembly, part of the 50S ribosomal subunit; part of the 5S rRNA/L5/L18/L25 subcomplex. Contacts the 5S rRNA and the P site tRNA. Forms a bridge to the 30S subunit in the 70S ribosome.

This is one of the proteins that bind and probably mediate the attachment of the 5S RNA into the large ribosomal subunit, where it forms part of the central protuberance. In the 70S ribosome it contacts protein S13 of the 30S subunit (bridge B1b), connecting the 2 subunits; this bridge is implicated in subunit movement. Contacts the P site tRNA; the 5S rRNA and some of its associated proteins might help stabilize positioning of ribosome-bound tRNAs. The chain is Large ribosomal subunit protein uL5 from Polaromonas naphthalenivorans (strain CJ2).